Here is a 115-residue protein sequence, read N- to C-terminus: Ribonuclease P protein component (115 aa).

This sequence belongs to the RnpA family. Consists of a catalytic RNA component (M1 or rnpB) and a protein subunit.

It catalyses the reaction Endonucleolytic cleavage of RNA, removing 5'-extranucleotides from tRNA precursor.. In terms of biological role, RNaseP catalyzes the removal of the 5'-leader sequence from pre-tRNA to produce the mature 5'-terminus. It can also cleave other RNA substrates such as 4.5S RNA. The protein component plays an auxiliary but essential role in vivo by binding to the 5'-leader sequence and broadening the substrate specificity of the ribozyme. The polypeptide is Ribonuclease P protein component (Macrococcus caseolyticus (strain JCSC5402) (Macrococcoides caseolyticum)).